Reading from the N-terminus, the 232-residue chain is Orotidine 5'-phosphate decarboxylase (232 aa).

Residues Asp10, Lys32, 59–68 (DLKFHDIPNT), Thr119, Arg180, Gln189, Gly209, and Arg210 contribute to the substrate site. The active-site Proton donor is the Lys61.

Belongs to the OMP decarboxylase family. Type 1 subfamily. Homodimer.

It carries out the reaction orotidine 5'-phosphate + H(+) = UMP + CO2. Its pathway is pyrimidine metabolism; UMP biosynthesis via de novo pathway; UMP from orotate: step 2/2. Functionally, catalyzes the decarboxylation of orotidine 5'-monophosphate (OMP) to uridine 5'-monophosphate (UMP). The chain is Orotidine 5'-phosphate decarboxylase from Actinobacillus succinogenes (strain ATCC 55618 / DSM 22257 / CCUG 43843 / 130Z).